Here is a 120-residue protein sequence, read N- to C-terminus: Small ribosomal subunit protein bS6 (120 aa).

The segment covering 97–112 has biased composition (polar residues); that stretch reads SNEPSPILKNQSTENT. Residues 97-120 form a disordered region; that stretch reads SNEPSPILKNQSTENTPVIDVTAN.

This sequence belongs to the bacterial ribosomal protein bS6 family.

Its function is as follows. Binds together with bS18 to 16S ribosomal RNA. This is Small ribosomal subunit protein bS6 from Rickettsia bellii (strain RML369-C).